The following is a 107-amino-acid chain: Translation initiation factor IF-1, chloroplastic (107 aa).

Residues 8–83 form the S1-like domain; it reads REKKNPREAK…SKGRIIYRLP (76 aa).

Belongs to the IF-1 family. As to quaternary structure, component of the 30S ribosomal translation pre-initiation complex which assembles on the 30S ribosome in the order IF-2 and IF-3, IF-1 and N-formylmethionyl-tRNA(fMet); mRNA recruitment can occur at any time during PIC assembly.

The protein localises to the plastid. It is found in the chloroplast. In terms of biological role, one of the essential components for the initiation of protein synthesis. Stabilizes the binding of IF-2 and IF-3 on the 30S subunit to which N-formylmethionyl-tRNA(fMet) subsequently binds. Helps modulate mRNA selection, yielding the 30S pre-initiation complex (PIC). Upon addition of the 50S ribosomal subunit IF-1, IF-2 and IF-3 are released leaving the mature 70S translation initiation complex. The polypeptide is Translation initiation factor IF-1, chloroplastic (Lolium perenne (Perennial ryegrass)).